Here is a 366-residue protein sequence, read N- to C-terminus: Histone-lysine N-methyltransferase SETD7 (366 aa).

MORN repeat units follow at residues 36–58, 59–81, and 106–128; these read FEGN…DGST, LEGY…DGGV, and FKGQ…DGGS. The SET domain maps to 214-336; the sequence is ERVYVAESLI…ADEELTVAYG (123 aa). S-adenosyl-L-methionine contacts are provided by residues 226–228, asparagine 296, histidine 297, and glutamate 356; that span reads AGE.

This sequence belongs to the class V-like SAM-binding methyltransferase superfamily. Histone-lysine methyltransferase family. SET7 subfamily. In terms of assembly, interacts with IPF1/PDX-1. Widely expressed. Expressed in pancreatic islets.

It is found in the nucleus. The protein resides in the chromosome. It catalyses the reaction L-lysyl(4)-[histone H3] + S-adenosyl-L-methionine = N(6)-methyl-L-lysyl(4)-[histone H3] + S-adenosyl-L-homocysteine + H(+). It carries out the reaction L-lysyl-[protein] + S-adenosyl-L-methionine = N(6)-methyl-L-lysyl-[protein] + S-adenosyl-L-homocysteine + H(+). Its function is as follows. Histone methyltransferase that specifically monomethylates 'Lys-4' of histone H3. H3 'Lys-4' methylation represents a specific tag for epigenetic transcriptional activation. Plays a central role in the transcriptional activation of genes such as collagenase or insulin. Recruited by IPF1/PDX-1 to the insulin promoter, leading to activate transcription. Also has methyltransferase activity toward non-histone proteins such as CGAS, p53/TP53, TAF10, and possibly TAF7 by recognizing and binding the [KR]-[STA]-K in substrate proteins. Monomethylates 'Lys-189' of TAF10, leading to increase the affinity of TAF10 for RNA polymerase II. Monomethylates 'Lys-372' of p53/TP53, stabilizing p53/TP53 and increasing p53/TP53-mediated transcriptional activation. Monomethylates 'Lys-491' of CGAS, promoting interaction between SGF29 and CGAS. The protein is Histone-lysine N-methyltransferase SETD7 (SETD7) of Homo sapiens (Human).